We begin with the raw amino-acid sequence, 439 residues long: Ribosomal protein uS12 methylthiotransferase RimO (439 aa).

Residues 2–114 (SKLYLMSLGC…IDEMILKKTN (113 aa)) enclose the MTTase N-terminal domain. The [4Fe-4S] cluster site is built by Cys-11, Cys-45, Cys-77, Cys-146, Cys-150, and Cys-153. The 232-residue stretch at 132–363 (TGSNSHAFIK…VDEVIEKSFE (232 aa)) folds into the Radical SAM core domain.

This sequence belongs to the methylthiotransferase family. RimO subfamily. [4Fe-4S] cluster is required as a cofactor.

It localises to the cytoplasm. The enzyme catalyses L-aspartate(89)-[ribosomal protein uS12]-hydrogen + (sulfur carrier)-SH + AH2 + 2 S-adenosyl-L-methionine = 3-methylsulfanyl-L-aspartate(89)-[ribosomal protein uS12]-hydrogen + (sulfur carrier)-H + 5'-deoxyadenosine + L-methionine + A + S-adenosyl-L-homocysteine + 2 H(+). Catalyzes the methylthiolation of an aspartic acid residue of ribosomal protein uS12. In Campylobacter jejuni subsp. jejuni serotype O:2 (strain ATCC 700819 / NCTC 11168), this protein is Ribosomal protein uS12 methylthiotransferase RimO.